The sequence spans 806 residues: 85/88 kDa calcium-independent phospholipase A2 (806 aa).

9 ANK repeats span residues 120 to 147 (WSVA…ANCA), 151 to 181 (EGCT…QMDV), 185 to 215 (KGET…GLNQ), 219 to 248 (QGLT…RCNI), 251 to 281 (PNGY…QIHS), 286 to 312 (YGAS…NVNS), 316 to 345 (AGNT…NADA), 349 to 378 (HGNT…EVDT), and 382 to 403 (FGET…KAIL). A run of 2 helical transmembrane segments spans residues 480–500 (LLCL…LIAI) and 511–531 (LFDW…ILHS). Residues 481–665 (LCLDGGGVKG…LANNPTLDAM (185 aa)) enclose the PNPLA domain. The GXGXXG motif lies at 485–490 (GGGVKG). The GXSXG motif lies at 517–521 (GTSTG). S519 (nucleophile) is an active-site residue. The Proton acceptor role is filled by D652. The DGA/G signature appears at 652 to 654 (DGG). Positions 677–686 (RKGQANKVKK) are calmodulin-binding (1-9-14 motif). A calmodulin-binding (IQ motif) region spans residues 748–759 (AWCEMVGIQYFR).

As to quaternary structure, homodimer formed by catalytic domains tightly interacting through a large hydrophobic interface. The contact area involves 3 alpha helices, several loops and a part of the beta sheet from each monomer. Both active sites of the dimer are in close proximity adopting an open conformation that provide sufficient space for phospholipid access and favoring cooperativity in deacylation-reacylation reactions. Each monomer has 9 ankyrin repeats stacked side-by-side in an elongated structure oriented outwards from the catalytic core. In terms of tissue distribution, four different transcripts were found to be expressed in a distinct tissue distribution.

The protein resides in the cytoplasm. It is found in the cell membrane. It localises to the mitochondrion. Its subcellular location is the cell projection. The protein localises to the pseudopodium. It catalyses the reaction a 1,2-diacyl-sn-glycero-3-phosphocholine + H2O = a 1-acyl-sn-glycero-3-phosphocholine + a fatty acid + H(+). It carries out the reaction a 1-O-alkyl-2-acyl-sn-glycero-3-phosphocholine + H2O = a 1-O-alkyl-sn-glycero-3-phosphocholine + a fatty acid + H(+). The catalysed reaction is 1,2-dihexadecanoyl-sn-glycero-3-phosphocholine + H2O = 1-hexadecanoyl-sn-glycero-3-phosphocholine + hexadecanoate + H(+). The enzyme catalyses 1-hexadecanoyl-2-(9Z-octadecenoyl)-sn-glycero-3-phosphocholine + H2O = 1-hexadecanoyl-sn-glycero-3-phosphocholine + (9Z)-octadecenoate + H(+). It catalyses the reaction 1-hexadecanoyl-2-(9Z,12Z-octadecadienoyl)-sn-glycero-3-phosphocholine + H2O = (9Z,12Z)-octadecadienoate + 1-hexadecanoyl-sn-glycero-3-phosphocholine + H(+). It carries out the reaction 1-hexadecanoyl-2-(5Z,8Z,11Z,14Z-eicosatetraenoyl)-sn-glycero-3-phosphocholine + H2O = 1-hexadecanoyl-sn-glycero-3-phosphocholine + (5Z,8Z,11Z,14Z)-eicosatetraenoate + H(+). The catalysed reaction is 1-octadecanoyl-2-(5Z,8Z,11Z,14Z-eicosatetraenoyl)-sn-glycero-3-phosphocholine + H2O = 1-octadecanoyl-sn-glycero-3-phosphocholine + (5Z,8Z,11Z,14Z)-eicosatetraenoate + H(+). The enzyme catalyses 1-hexadecanoyl-2-(5Z,8Z,11Z,14Z-eicosatetraenoyl)-sn-glycero-3-phosphoethanolamine + H2O = 1-hexadecanoyl-sn-glycero-3-phosphoethanolamine + (5Z,8Z,11Z,14Z)-eicosatetraenoate + H(+). It catalyses the reaction 1,2-dihexadecanoyl-sn-glycero-3-phosphate + H2O = 1-hexadecanoyl-sn-glycero-3-phosphate + hexadecanoate + H(+). It carries out the reaction a 1-acyl-sn-glycero-3-phosphocholine + H2O = sn-glycerol 3-phosphocholine + a fatty acid + H(+). The catalysed reaction is 1-hexadecanoyl-sn-glycero-3-phosphocholine + H2O = sn-glycerol 3-phosphocholine + hexadecanoate + H(+). The enzyme catalyses 1-(5Z,8Z,11Z,14Z-eicosatetraenoyl)-sn-glycero-3-phosphocholine + H2O = sn-glycerol 3-phosphocholine + (5Z,8Z,11Z,14Z)-eicosatetraenoate + H(+). It catalyses the reaction 2-(5Z,8Z,11Z,14Z)-eicosatetraenoyl-sn-glycero-3-phosphocholine + H2O = sn-glycerol 3-phosphocholine + (5Z,8Z,11Z,14Z)-eicosatetraenoate + H(+). It carries out the reaction 1-O-hexadecyl-2-(5Z,8Z,11Z,14Z)-eicosatetraenoyl-sn-glycero-3-phosphocholine + H2O = 1-O-hexadecyl-sn-glycero-3-phosphocholine + (5Z,8Z,11Z,14Z)-eicosatetraenoate + H(+). The catalysed reaction is 1-O-hexadecyl-2-acetyl-sn-glycero-3-phosphocholine + H2O = 1-O-hexadecyl-sn-glycero-3-phosphocholine + acetate + H(+). The enzyme catalyses hexadecanoyl-CoA + H2O = hexadecanoate + CoA + H(+). It catalyses the reaction 1',3'-bis[1,2-di-(9Z-octadecenoyl)-sn-glycero-3-phospho]-glycerol + H2O = 1'-[1,2-di-(9Z-octadecenoyl)-sn-glycero-3-phospho]-3'-[1-(9Z-octadecenoyl)-sn-glycero-3-phospho]-glycerol + (9Z)-octadecenoate + H(+). It carries out the reaction 1'-[1,2-di-(9Z-octadecenoyl)-sn-glycero-3-phospho]-3'-[1-(9Z-octadecenoyl)-sn-glycero-3-phospho]-glycerol + H2O = 1',3'-bis-[1-(9Z-octadecenoyl)-sn-glycero-3-phospho]-glycerol + (9Z)-octadecenoate + H(+). The catalysed reaction is 1',3'-bis-[1,2-di-(9Z,12Z-octadecadienoyl)-sn-glycero-3-phospho]-glycerol + H2O = 1'-[1,2-di-(9Z,12Z-octadecadienoyl)-sn-glycero-3-phospho]-3'-[1-(9Z,12Z-octadecadienoyl)-sn-glycero-3-phospho]-glycerol + (9Z,12Z)-octadecadienoate + H(+). The enzyme catalyses 1-octadecanoyl-2-(15-hydroxy-(5Z,8Z,11Z,13E)-eicosatetraenoyl)-sn-glycero-3-phosphoethanolamine + H2O = 1-octadecanoyl-sn-glycero-3-phosphoethanolamine + 15-hydroxy-(5Z,8Z,11Z,13E)-eicosatetraenoate + H(+). Activated by ATP. Inhibited by calcium-activated calmodulin. Inhibited by bromoenol lactone (BEL). Functionally, calcium-independent phospholipase involved in phospholipid remodeling with implications in cellular membrane homeostasis, mitochondrial integrity and signal transduction. Hydrolyzes the ester bond of the fatty acyl group attached at sn-1 or sn-2 position of phospholipids (phospholipase A1 and A2 activity respectively), producing lysophospholipids that are used in deacylation-reacylation cycles. Hydrolyzes both saturated and unsaturated long fatty acyl chains in various glycerophospholipid classes such as phosphatidylcholines, phosphatidylethanolamines and phosphatidates, with a preference for hydrolysis at sn-2 position. Can further hydrolyze lysophospholipids carrying saturated fatty acyl chains (lysophospholipase activity). Upon oxidative stress, contributes to remodeling of mitochondrial phospholipids in pancreatic beta cells, in a repair mechanism to reduce oxidized lipid content. Preferentially hydrolyzes oxidized polyunsaturated fatty acyl chains from cardiolipins, yielding monolysocardiolipins that can be reacylated with unoxidized fatty acyls to regenerate native cardiolipin species. Hydrolyzes oxidized glycerophosphoethanolamines present in pancreatic islets, releasing oxidized polyunsaturated fatty acids such as hydroxyeicosatetraenoates (HETEs). Has thioesterase activity toward fatty-acyl CoA releasing CoA-SH known to facilitate fatty acid transport and beta-oxidation in mitochondria particularly in skeletal muscle. Plays a role in regulation of membrane dynamics and homeostasis. Selectively hydrolyzes sn-2 arachidonoyl group in plasmalogen phospholipids, structural components of lipid rafts and myelin. Regulates F-actin polymerization at the pseudopods, which is required for both speed and directionality of MCP1/CCL2-induced monocyte chemotaxis. Targets membrane phospholipids to produce potent lipid signaling messengers. Generates lysophosphatidate (LPA, 1-acyl-glycerol-3-phosphate), which acts via G-protein receptors in various cell types. Has phospholipase A2 activity toward platelet-activating factor (PAF, 1-O-alkyl-2-acetyl-sn-glycero-3-phosphocholine), likely playing a role in inactivation of this potent pro-inflammatory signaling lipid. In response to glucose, amplifies calcium influx in pancreatic beta cells to promote INS secretion. In terms of biological role, lacks the catalytic domain and may act as a negative regulator of the catalytically active isoforms. This Homo sapiens (Human) protein is 85/88 kDa calcium-independent phospholipase A2 (PLA2G6).